Consider the following 290-residue polypeptide: Porphobilinogen deaminase (290 aa).

S-(dipyrrolylmethanemethyl)cysteine is present on cysteine 238.

It belongs to the HMBS family. Monomer. It depends on dipyrromethane as a cofactor.

It catalyses the reaction 4 porphobilinogen + H2O = hydroxymethylbilane + 4 NH4(+). It participates in porphyrin-containing compound metabolism; protoporphyrin-IX biosynthesis; coproporphyrinogen-III from 5-aminolevulinate: step 2/4. Functionally, tetrapolymerization of the monopyrrole PBG into the hydroxymethylbilane pre-uroporphyrinogen in several discrete steps. This is Porphobilinogen deaminase from Caldicellulosiruptor saccharolyticus (strain ATCC 43494 / DSM 8903 / Tp8T 6331).